Reading from the N-terminus, the 137-residue chain is Competence protein D (137 aa).

Involved in transformation (genetic competence for DNA uptake). In Haemophilus influenzae (strain ATCC 51907 / DSM 11121 / KW20 / Rd), this protein is Competence protein D (comD).